Consider the following 126-residue polypeptide: Holo-[acyl-carrier-protein] synthase (126 aa).

Mg(2+) contacts are provided by D9 and E58.

The protein belongs to the P-Pant transferase superfamily. AcpS family. Requires Mg(2+) as cofactor.

It localises to the cytoplasm. It carries out the reaction apo-[ACP] + CoA = holo-[ACP] + adenosine 3',5'-bisphosphate + H(+). Its function is as follows. Transfers the 4'-phosphopantetheine moiety from coenzyme A to a Ser of acyl-carrier-protein. This chain is Holo-[acyl-carrier-protein] synthase, found in Photorhabdus laumondii subsp. laumondii (strain DSM 15139 / CIP 105565 / TT01) (Photorhabdus luminescens subsp. laumondii).